The sequence spans 194 residues: uncharacterized protein (194 aa).

A helical transmembrane segment spans residues 17–37; that stretch reads DVWLYLLVFGCLSVLVLVLVH.

The protein belongs to the IIV-6 307L family.

The protein resides in the membrane. This is an uncharacterized protein from Invertebrate iridescent virus 3 (IIV-3).